The sequence spans 227 residues: Cytochrome c oxidase subunit 2 (227 aa).

At 1 to 14 (MAYPVQLGFQDAAS) the chain is on the mitochondrial intermembrane side. A helical transmembrane segment spans residues 15 to 45 (PIMEELLYFHDHTLMIMFLISSLVLYIISLM). Residues 46 to 59 (LTTELMHTNTMDAQ) lie on the Mitochondrial matrix side of the membrane. Residues 60-87 (EVETVWTILPAAILILIALPSLRILYMM) traverse the membrane as a helical segment. The Mitochondrial intermembrane portion of the chain corresponds to 88 to 227 (DEITTPSLTL…HFEEWLLSML (140 aa)). Residues His-161, Cys-196, Glu-198, Cys-200, His-204, and Met-207 each coordinate Cu cation. Glu-198 is a binding site for Mg(2+).

It belongs to the cytochrome c oxidase subunit 2 family. Component of the cytochrome c oxidase (complex IV, CIV), a multisubunit enzyme composed of 14 subunits. The complex is composed of a catalytic core of 3 subunits MT-CO1, MT-CO2 and MT-CO3, encoded in the mitochondrial DNA, and 11 supernumerary subunits COX4I, COX5A, COX5B, COX6A, COX6B, COX6C, COX7A, COX7B, COX7C, COX8 and NDUFA4, which are encoded in the nuclear genome. The complex exists as a monomer or a dimer and forms supercomplexes (SCs) in the inner mitochondrial membrane with NADH-ubiquinone oxidoreductase (complex I, CI) and ubiquinol-cytochrome c oxidoreductase (cytochrome b-c1 complex, complex III, CIII), resulting in different assemblies (supercomplex SCI(1)III(2)IV(1) and megacomplex MCI(2)III(2)IV(2)). Found in a complex with TMEM177, COA6, COX18, COX20, SCO1 and SCO2. Interacts with TMEM177 in a COX20-dependent manner. Interacts with COX20. Interacts with COX16. It depends on Cu cation as a cofactor.

It is found in the mitochondrion inner membrane. It catalyses the reaction 4 Fe(II)-[cytochrome c] + O2 + 8 H(+)(in) = 4 Fe(III)-[cytochrome c] + 2 H2O + 4 H(+)(out). Functionally, component of the cytochrome c oxidase, the last enzyme in the mitochondrial electron transport chain which drives oxidative phosphorylation. The respiratory chain contains 3 multisubunit complexes succinate dehydrogenase (complex II, CII), ubiquinol-cytochrome c oxidoreductase (cytochrome b-c1 complex, complex III, CIII) and cytochrome c oxidase (complex IV, CIV), that cooperate to transfer electrons derived from NADH and succinate to molecular oxygen, creating an electrochemical gradient over the inner membrane that drives transmembrane transport and the ATP synthase. Cytochrome c oxidase is the component of the respiratory chain that catalyzes the reduction of oxygen to water. Electrons originating from reduced cytochrome c in the intermembrane space (IMS) are transferred via the dinuclear copper A center (CU(A)) of subunit 2 and heme A of subunit 1 to the active site in subunit 1, a binuclear center (BNC) formed by heme A3 and copper B (CU(B)). The BNC reduces molecular oxygen to 2 water molecules using 4 electrons from cytochrome c in the IMS and 4 protons from the mitochondrial matrix. In Hapalemur griseus (Gray gentle lemur), this protein is Cytochrome c oxidase subunit 2 (MT-CO2).